Consider the following 732-residue polypeptide: Sesterbrasiliatriene synthase PbSS (732 aa).

The segment at 1–342 is terpene cyclase; it reads MDFLSGAFHY…SRYHRDDLIT (342 aa). The Mg(2+) site is built by Asp-105 and Asp-109. Substrate-binding positions include Asp-105, Asp-109, 193 to 196, 242 to 246, and 334 to 335; these read RLSE, FNKEF, and RY. The short motif at 105-109 is the DDXXD 1 element; the sequence is DDVTD. Residues 238–246 carry the NSE/DTE motif; sequence DYYSFNKEF. The tract at residues 343 to 732 is prenyltransferase; it reads TAGDRAMIVG…ARILLLGLGL (390 aa). Disordered regions lie at residues 371 to 390 and 398 to 420; these read KSAT…WSDS and ACYT…HKAN. The span at 411 to 420 shows a compositional bias: basic and acidic residues; it reads NGTEAGHKAN. The isopentenyl diphosphate site is built by Lys-453, Arg-456, and His-485. Mg(2+) is bound by residues Asp-492 and Asp-496. Positions 492-496 match the DDXXD 2 motif; that stretch reads DDIED. Arg-501 provides a ligand contact to dimethylallyl diphosphate. Residue Arg-502 coordinates isopentenyl diphosphate. Residues Lys-579, Thr-580, Gln-615, Asn-622, Lys-632, and Lys-642 each contribute to the dimethylallyl diphosphate site.

The protein in the N-terminal section; belongs to the terpene synthase family. It in the C-terminal section; belongs to the FPP/GGPP synthase family. In terms of assembly, hexamer. Requires Mg(2+) as cofactor.

It carries out the reaction isopentenyl diphosphate + (2E,6E)-farnesyl diphosphate = (2E,6E,10E)-geranylgeranyl diphosphate + diphosphate. The enzyme catalyses isopentenyl diphosphate + (2E,6E,10E)-geranylgeranyl diphosphate = (2E,6E,10E,14E)-geranylfarnesyl diphosphate + diphosphate. Its pathway is secondary metabolite biosynthesis; terpenoid biosynthesis. Functionally, bifunctional sesterterpene synthase that possesses both prenyl transferase and terpene cyclase activity, converting isopentenyl diphosphate and dimethylallyl diphosphate into geranylfarnesyl diphosphate (GFPP) and further converting GFPP into sesterbrasiliatriene. The chain is Sesterbrasiliatriene synthase PbSS (PbSS) from Penicillium brasilianum.